The primary structure comprises 182 residues: Large ribosomal subunit protein uL6 (182 aa).

It belongs to the universal ribosomal protein uL6 family. Part of the 50S ribosomal subunit.

This protein binds to the 23S rRNA, and is important in its secondary structure. It is located near the subunit interface in the base of the L7/L12 stalk, and near the tRNA binding site of the peptidyltransferase center. The polypeptide is Large ribosomal subunit protein uL6 (Carboxydothermus hydrogenoformans (strain ATCC BAA-161 / DSM 6008 / Z-2901)).